The following is a 307-amino-acid chain: N-myc-interactor (307 aa).

The tract at residues 1–24 is disordered; sequence MEADKDDTQQILKEHSPDEFIKDE. Serine 16 bears the Phosphoserine mark. Lysine 22 is covalently cross-linked (Glycyl lysine isopeptide (Lys-Gly) (interchain with G-Cter in ubiquitin)). Residues 30–64 adopt a coiled-coil conformation; sequence IDEITKKNIQLKKEIQKLETELQEATKEFQIKEDI. 2 consecutive NID domains span residues 103–192 and 201–292; these read GQAL…GEVD and GSAV…EVDV.

This sequence belongs to the NMI family. In terms of assembly, interacts with MYCN and MYC, as well as with other transcription factors with a Zip, HLH or a HLH-Zip motif. Interacts with all STAT proteins except STAT2. Interacts with IRF7, the interaction is direct and leads to the inhibition of IRF7-mediated type I IFN production. Interacts (via coiled-coil domain) with TRIM21 (via the SPRY domain); the interaction leads to 'Lys-63'-linked ubiquitination of NMI. Interacts with IFI35; the interaction is direct and is facilitated by TRIM21. Interacts with TLR4; the interaction is direct and leads to NF-kappa-B activation. (Microbial infection) Interacts with human cytomegalovirus protein UL23; this interaction inhibits NMI-mediated transcription of interferon-gamma stimulated genes. Post-translationally, ubiquitinated. 'Lys-63'-linked ubiquitination by TRIM21 promotes interaction with IFI35 and inhibits virus-triggered type I IFN-beta production. In terms of tissue distribution, expressed in adult spleen, liver, and kidney. Expressed in fetal thymus, liver, placenta, spleen, lung, and kidney but not brain. Expressed in macrophages.

The protein resides in the cytoplasm. The protein localises to the nucleus. Its subcellular location is the secreted. Its function is as follows. Acts as a signaling pathway regulator involved in innate immune system response. In response to interleukin 2/IL2 and interferon IFN-gamma/IFNG, interacts with signal transducer and activator of transcription/STAT which activate the transcription of downstream genes involved in a multitude of signals for development and homeostasis. Enhances the recruitment of CBP/p300 coactivators to STAT1 and STAT5, resulting in increased STAT1- and STAT5-dependent transcription. In response to interferon IFN-alpha, associates in a complex with signaling pathway regulator IFI35 to regulate immune response; the complex formation prevents proteasome-mediated degradation of IFI35. In complex with IFI35, inhibits virus-triggered type I IFN-beta production when ubiquitinated by ubiquitin-protein ligase TRIM21. In complex with IFI35, negatively regulates nuclear factor NF-kappa-B signaling by inhibiting the nuclear translocation, activation and transcription of NF-kappa-B subunit p65/RELA, resulting in the inhibition of endothelial cell proliferation, migration and re-endothelialization of injured arteries. Negatively regulates virus-triggered type I interferon/IFN production by inducing proteosome-dependent degradation of IRF7, a transcriptional regulator of type I IFN, thereby interfering with cellular antiviral responses. Beside its role as an intracellular signaling pathway regulator, also functions extracellularly as damage-associated molecular patterns (DAMPs) to promote inflammation, when actively released by macrophage to the extracellular space during cell injury or pathogen invasion. Macrophage-secreted NMI activates NF-kappa-B signaling in adjacent macrophages through Toll-like receptor 4/TLR4 binding and activation, thereby inducing NF-kappa-B translocation from the cytoplasm into the nucleus which promotes the release of pro-inflammatory cytokines. This chain is N-myc-interactor, found in Homo sapiens (Human).